Here is a 241-residue protein sequence, read N- to C-terminus: UPF0280 protein MK0206 (241 aa).

This sequence belongs to the UPF0280 family.

The protein is UPF0280 protein MK0206 of Methanopyrus kandleri (strain AV19 / DSM 6324 / JCM 9639 / NBRC 100938).